The chain runs to 335 residues: Ferrochelatase (335 aa).

His207 and Glu288 together coordinate Fe cation.

The protein belongs to the ferrochelatase family.

It is found in the cytoplasm. It carries out the reaction heme b + 2 H(+) = protoporphyrin IX + Fe(2+). The protein operates within porphyrin-containing compound metabolism; protoheme biosynthesis; protoheme from protoporphyrin-IX: step 1/1. Its function is as follows. Catalyzes the ferrous insertion into protoporphyrin IX. This chain is Ferrochelatase, found in Helicobacter pylori (strain HPAG1).